Here is a 392-residue protein sequence, read N- to C-terminus: Succinate--CoA ligase [ADP-forming] subunit beta (392 aa).

The region spanning 9–247 (KEILRVCGVP…LYEEDPKEIE (239 aa)) is the ATP-grasp domain. ATP is bound by residues Lys-49, 56-58 (GRG), Glu-102, Gln-105, and Glu-110. Positions 202 and 216 each coordinate Mg(2+). Substrate contacts are provided by residues Asn-267 and 324-326 (GIM).

This sequence belongs to the succinate/malate CoA ligase beta subunit family. Heterotetramer of two alpha and two beta subunits. Requires Mg(2+) as cofactor.

The enzyme catalyses succinate + ATP + CoA = succinyl-CoA + ADP + phosphate. The catalysed reaction is GTP + succinate + CoA = succinyl-CoA + GDP + phosphate. It participates in carbohydrate metabolism; tricarboxylic acid cycle; succinate from succinyl-CoA (ligase route): step 1/1. Its function is as follows. Succinyl-CoA synthetase functions in the citric acid cycle (TCA), coupling the hydrolysis of succinyl-CoA to the synthesis of either ATP or GTP and thus represents the only step of substrate-level phosphorylation in the TCA. The beta subunit provides nucleotide specificity of the enzyme and binds the substrate succinate, while the binding sites for coenzyme A and phosphate are found in the alpha subunit. This Neorickettsia sennetsu (strain ATCC VR-367 / Miyayama) (Ehrlichia sennetsu) protein is Succinate--CoA ligase [ADP-forming] subunit beta.